The sequence spans 543 residues: MGSKYAAGHYSCSSYFQSLDIPENRQFVQGMKKRYGQDTVISSVMANTYSGIQMILEAIVHLRSTDRKKILNYLYNKTFPSPSGNITIESNHHLSREVRIGQANLDGQFDIVWSSEQPIPAKPLMTNTIIDSANEEQIWKYVVESMGEETADGVLVLDQDQTILYANSAAYSFLRVKQGDILKEEQLREISHQLIKKETSKYGVQLFIFKRAKRGPLLVTKPDKEPYRFGRVVTYNPSFEKELRTASIASQSDANVLILGETGSGKEVLARTIHEQSPRRNGPFVALNAGAIPRELIASELFGYVEGAFTGARKGGRPGKFEVADGGTLFLDEIGDMPLELQVNLLRVLEERKVIRIGDHKERPINVRVIAATNRNLKEEIAYRGSFRSDLYYRLNVFTIHIPPLRDRKEDIETLSLQFLKNFHQHYCGKGTCHLSNSALQLLQSYNWPGNIRELRNVIERAFLLAIDEPEILPIHLPEEIQNANCAIPPSSVNNLKDVEKKMIEQALKESKSLTEAAKKLGITRSTLYRKIKQWKIHKTTFS.

The 233-residue stretch at 232–464 folds into the Sigma-54 factor interaction domain; sequence VVTYNPSFEK…LRNVIERAFL (233 aa). ATP is bound by residues 260 to 267 and 324 to 333; these read GETGSGKE and ADGGTLFLDE.

It catalyses the reaction (4S)-limonene + reduced [NADPH--hemoprotein reductase] + O2 = (1S,5R)-carveol + oxidized [NADPH--hemoprotein reductase] + H2O + H(+). The catalysed reaction is (4S)-limonene + reduced [NADPH--hemoprotein reductase] + O2 = (4S)-perillyl alcohol + oxidized [NADPH--hemoprotein reductase] + H2O + H(+). It carries out the reaction perillyl alcohol + NAD(+) = perillyl aldehyde + NADH + H(+). The enzyme catalyses (1S,5R)-carveol + NADP(+) = (R)-carvone + NADPH + H(+). Involved in limonene hydroxylation to a mixture of carveol and perillyl alcohol as well as in dehydrogenation of these products to carvone and perillyl aldehyde. Aromatic alcohols containing an isopropyl or isopropenyl group at ring position 4 also served as substrates for the dehydrogenase activity. This Geobacillus stearothermophilus (Bacillus stearothermophilus) protein is Limonene hydroxylase.